Reading from the N-terminus, the 378-residue chain is Diacetylchitobiose uptake system ATP-binding protein MsiK (378 aa).

The 233-residue stretch at V4 to I236 folds into the ABC transporter domain. ATP is bound at residue G38–S45.

Belongs to the ABC transporter superfamily. The DasABC-MsiK complex is composed of two ATP-binding proteins (MsiK), two transmembrane proteins (DasB and DasC) and a solute-binding protein (DasA). The NgcEFG-MsiK complex is composed of two ATP-binding proteins (MsiK), two transmembrane proteins (NgcF and NgcG) and a solute-binding protein (NgcE).

The protein localises to the cell membrane. Its function is as follows. Part of the ABC transporter complexes DasABC-MsiK and NgcEFG-MsiK involved in N,N'-diacetylchitobiose ((GlcNAc)2) uptake. Responsible for energy coupling to the transport system. The sequence is that of Diacetylchitobiose uptake system ATP-binding protein MsiK from Streptomyces coelicolor (strain ATCC BAA-471 / A3(2) / M145).